The following is a 328-amino-acid chain: MSMAIKYSVIAGSGSYLPERVVSNDELAVELAQRGIQTSDEWIVERTGIRQRHLAERGVTTSVLATEAARRAMADAGVGPADLDLIIVATSTPDFVFPSTACLVQANLGAKGGAAFDVQAVCSGFAYALTTADSFVRAGRVRCALVIGAEVFSSILDWNDRSTCVLFGDGAGAVVIKAADEPGILAAQLHADGSQTKILCAAGNVAYGQVTGDPFLRMDGQAVFKQAVTVLDRSARDVCAEAGMTIDQVDWLVPHQANVRILNFLARKLNVSADRVVVTVDQHANTSAASVPLALDAARRDGRIKPGQHVLMQGVGGGFTWGSVLARM.

Catalysis depends on residues cysteine 122 and histidine 255. The segment at 256–260 (QANVR) is ACP-binding. The active site involves asparagine 285.

Belongs to the thiolase-like superfamily. FabH family. In terms of assembly, homodimer.

Its subcellular location is the cytoplasm. The catalysed reaction is malonyl-[ACP] + acetyl-CoA + H(+) = 3-oxobutanoyl-[ACP] + CO2 + CoA. The protein operates within lipid metabolism; fatty acid biosynthesis. Catalyzes the condensation reaction of fatty acid synthesis by the addition to an acyl acceptor of two carbons from malonyl-ACP. Catalyzes the first condensation reaction which initiates fatty acid synthesis and may therefore play a role in governing the total rate of fatty acid production. Possesses both acetoacetyl-ACP synthase and acetyl transacylase activities. Its substrate specificity determines the biosynthesis of branched-chain and/or straight-chain of fatty acids. This Bordetella avium (strain 197N) protein is Beta-ketoacyl-[acyl-carrier-protein] synthase III.